Here is a 431-residue protein sequence, read N- to C-terminus: Glutamate--tRNA ligase 1 (431 aa).

A 'HIGH' region motif is present at residues 6 to 16 (PSPTGDMHIGN). The short motif at 235 to 239 (KMSKR) is the 'KMSKS' region element. K238 provides a ligand contact to ATP.

This sequence belongs to the class-I aminoacyl-tRNA synthetase family. Glutamate--tRNA ligase type 1 subfamily. In terms of assembly, monomer.

It is found in the cytoplasm. It carries out the reaction tRNA(Glu) + L-glutamate + ATP = L-glutamyl-tRNA(Glu) + AMP + diphosphate. Catalyzes the attachment of glutamate to tRNA(Glu) in a two-step reaction: glutamate is first activated by ATP to form Glu-AMP and then transferred to the acceptor end of tRNA(Glu). This is Glutamate--tRNA ligase 1 from Campylobacter jejuni subsp. jejuni serotype O:2 (strain ATCC 700819 / NCTC 11168).